The primary structure comprises 205 residues: Peptidyl-prolyl cis-trans isomerase B (205 aa).

Residues 1–20 (MKFSGLWCWLLLFLSVNVIA) form the signal peptide. The PPIase cyclophilin-type domain maps to 39–198 (FFDIEHGEEK…EAVKIAKCGE (160 aa)).

The protein belongs to the cyclophilin-type PPIase family. PPIase B subfamily.

It is found in the secreted. It catalyses the reaction [protein]-peptidylproline (omega=180) = [protein]-peptidylproline (omega=0). With respect to regulation, cyclosporin A (CsA) inhibits CYPB. Functionally, PPIases accelerate the folding of proteins. It catalyzes the cis-trans isomerization of proline imidic peptide bonds in oligopeptides. This chain is Peptidyl-prolyl cis-trans isomerase B (CPR2), found in Saccharomyces cerevisiae (strain ATCC 204508 / S288c) (Baker's yeast).